We begin with the raw amino-acid sequence, 227 residues long: MKMVAPWTRFYSHSCCLCCHVRTGTILLGVWYLIINAVVLLILLSALADPNQYHFSGSELGGEFEFMDDANMCIAIAISLLMILICAMATYGAYKQHAAWIIPFFCYQIFDFALNTLVAITVLVYPNSIQEYIRQLPPSFPYRDDIMSVNPTCLVLIILLFIGILLTLKGYLISCVWSCYRYINGRNSSDVLVYVTSNDTTVLLPPYDDATAVPSTAKEPPPPYVSA.

4 helical membrane-spanning segments follow: residues 26–46 (ILLG…LLSA), 72–92 (MCIA…ATYG), 100–120 (WIIP…LVAI), and 153–173 (CLVL…GYLI). The segment at 205–222 (PPYDDATAVPSTAKEPPP) is required for NEDD4 interaction.

It belongs to the LAPTM4/LAPTM5 transporter family. As to quaternary structure, homooligomer; upon reaching the lysosomes. Interacts with MCOLN1. Interacts with NEDD4; may play a role in the lysosomal sorting of LAPTM4B; enhances HGS association with NEDD4; mediates inhibition of EGFR degradation. Interacts with PIP5K1C; promotes SNX5 association with LAPTM4B; kinase activity of PIP5K1C is required; interaction is regulated by phosphatidylinositol 4,5-bisphosphate generated by PIP5K1C. Interacts with HGS; promotes HGS ubiquitination. Interacts with SNX5. Interacts with SLC3A2 and SLC7A5; recruits SLC3A2 and SLC7A5 to lysosomes to promote leucine uptake into these organelles and is required for mTORC1 activation. Interacts with LRRC32; decreases TGFB1 production in regulatory T cells. Interacts with BECN1; competes with EGFR for LAPTM4B binding; regulates EGFR activity. Interacts with EGFR; positively correlates with EGFR activation. In terms of processing, undergoes proteolytic cleavage following delivery to the lysosomes. Post-translationally, ubiquitinated by NEDD4.

Its subcellular location is the endomembrane system. The protein resides in the late endosome membrane. The protein localises to the cell membrane. It is found in the cell projection. It localises to the lysosome membrane. Its subcellular location is the endosome membrane. The protein resides in the endosome. The protein localises to the multivesicular body membrane. It is found in the multivesicular body lumen. In terms of biological role, required for optimal lysosomal function. Blocks EGF-stimulated EGFR intraluminal sorting and degradation. Conversely by binding with the phosphatidylinositol 4,5-bisphosphate, regulates its PIP5K1C interaction, inhibits HGS ubiquitination and relieves LAPTM4B inhibition of EGFR degradation. Recruits SLC3A2 and SLC7A5 (the Leu transporter) to the lysosome, promoting entry of leucine and other essential amino acid (EAA) into the lysosome, stimulating activation of proton-transporting vacuolar (V)-ATPase protein pump (V-ATPase) and hence mTORC1 activation. Plays a role as negative regulator of TGFB1 production in regulatory T cells. Binds ceramide and facilitates its exit from late endosome in order to control cell death pathways. This Mus musculus (Mouse) protein is Lysosomal-associated transmembrane protein 4B.